We begin with the raw amino-acid sequence, 545 residues long: Glucose-6-phosphate isomerase (545 aa).

E351 (proton donor) is an active-site residue. Residues H382 and K510 contribute to the active site.

The protein belongs to the GPI family.

It localises to the cytoplasm. The catalysed reaction is alpha-D-glucose 6-phosphate = beta-D-fructose 6-phosphate. It functions in the pathway carbohydrate biosynthesis; gluconeogenesis. The protein operates within carbohydrate degradation; glycolysis; D-glyceraldehyde 3-phosphate and glycerone phosphate from D-glucose: step 2/4. Functionally, catalyzes the reversible isomerization of glucose-6-phosphate to fructose-6-phosphate. The chain is Glucose-6-phosphate isomerase from Helicobacter pylori (strain P12).